The primary structure comprises 254 residues: Thiazole synthase (254 aa).

Lys95 acts as the Schiff-base intermediate with DXP in catalysis. Residues Gly156, 182 to 183, and 204 to 205 contribute to the 1-deoxy-D-xylulose 5-phosphate site; these read AG and NT.

This sequence belongs to the ThiG family. Homotetramer. Forms heterodimers with either ThiH or ThiS.

Its subcellular location is the cytoplasm. It catalyses the reaction [ThiS sulfur-carrier protein]-C-terminal-Gly-aminoethanethioate + 2-iminoacetate + 1-deoxy-D-xylulose 5-phosphate = [ThiS sulfur-carrier protein]-C-terminal Gly-Gly + 2-[(2R,5Z)-2-carboxy-4-methylthiazol-5(2H)-ylidene]ethyl phosphate + 2 H2O + H(+). It participates in cofactor biosynthesis; thiamine diphosphate biosynthesis. In terms of biological role, catalyzes the rearrangement of 1-deoxy-D-xylulose 5-phosphate (DXP) to produce the thiazole phosphate moiety of thiamine. Sulfur is provided by the thiocarboxylate moiety of the carrier protein ThiS. In vitro, sulfur can be provided by H(2)S. The chain is Thiazole synthase from Shewanella piezotolerans (strain WP3 / JCM 13877).